Here is a 116-residue protein sequence, read N- to C-terminus: Large ribosomal subunit protein uL18 (116 aa).

Belongs to the universal ribosomal protein uL18 family. Part of the 50S ribosomal subunit; part of the 5S rRNA/L5/L18/L25 subcomplex. Contacts the 5S and 23S rRNAs.

Its function is as follows. This is one of the proteins that bind and probably mediate the attachment of the 5S RNA into the large ribosomal subunit, where it forms part of the central protuberance. In Pseudomonas syringae pv. tomato (strain ATCC BAA-871 / DC3000), this protein is Large ribosomal subunit protein uL18.